A 597-amino-acid chain; its full sequence is UvrABC system protein C (597 aa).

Residues 15–93 (NSPGVYQYFD…IKKHQPRFNV (79 aa)) enclose the GIY-YIG domain. Positions 207–242 (KDSLQRFRNQMKQHSEKMEFEDAQRIKNKIDVLENY) constitute a UVR domain.

It belongs to the UvrC family. As to quaternary structure, interacts with UvrB in an incision complex.

The protein resides in the cytoplasm. The UvrABC repair system catalyzes the recognition and processing of DNA lesions. UvrC both incises the 5' and 3' sides of the lesion. The N-terminal half is responsible for the 3' incision and the C-terminal half is responsible for the 5' incision. The polypeptide is UvrABC system protein C (Christiangramia forsetii (strain DSM 17595 / CGMCC 1.15422 / KT0803) (Gramella forsetii)).